Here is a 428-residue protein sequence, read N- to C-terminus: RF4 protein (428 aa).

N-linked (GlcNAc...) asparagine glycosylation is found at asparagine 8, asparagine 205, and asparagine 344.

Its function is as follows. Not known. This chain is RF4 protein (RF4), found in Kluyveromyces lactis (strain ATCC 8585 / CBS 2359 / DSM 70799 / NBRC 1267 / NRRL Y-1140 / WM37) (Yeast).